A 444-amino-acid chain; its full sequence is Glutamate--tRNA ligase 1 (444 aa).

Residues 8–18 carry the 'HIGH' region motif; the sequence is PSPTGFLHVGN. Positions 239 to 243 match the 'KMSKS' region motif; the sequence is KISKR. Residue lysine 242 participates in ATP binding.

The protein belongs to the class-I aminoacyl-tRNA synthetase family. Glutamate--tRNA ligase type 1 subfamily. As to quaternary structure, monomer.

The protein resides in the cytoplasm. It carries out the reaction tRNA(Glu) + L-glutamate + ATP = L-glutamyl-tRNA(Glu) + AMP + diphosphate. Catalyzes the attachment of glutamate to tRNA(Glu) in a two-step reaction: glutamate is first activated by ATP to form Glu-AMP and then transferred to the acceptor end of tRNA(Glu). The sequence is that of Glutamate--tRNA ligase 1 from Zymomonas mobilis subsp. mobilis (strain ATCC 31821 / ZM4 / CP4).